Reading from the N-terminus, the 574-residue chain is Membralin (574 aa).

Residues 1–27 (MSEHAAAPGPGPNGGGGGGAAPVRGPR) are disordered. Serine 2 carries the N-acetylserine modification. The chain crosses the membrane as a helical span at residues 69-89 (FFVLLKALFVLFVLAYIHIVF). A glycan (N-linked (GlcNAc...) asparagine) is linked at asparagine 180. 3 helical membrane-spanning segments follow: residues 293 to 313 (TSYLAAFVIMVIFTLSVSMLL), 337 to 357 (IAFPAAPLLTVILALVGMEAI), and 417 to 437 (YSSLALVTSWLFIQHSMIYFF). Low complexity-rich tracts occupy residues 461 to 470 (LGPGTPTALP) and 491 to 501 (LGPSSSPAPTG). 2 disordered regions span residues 461 to 515 (LGPG…GASV) and 546 to 574 (RRPTAPSTPDSSRPDPGVPLEDAPAPAGS).

It belongs to the membralin family. As to quaternary structure, interacts with ERLIN2. As to expression, detected in brain, spinal cord, lung, liver and kidney.

It localises to the endoplasmic reticulum membrane. May have a role in the ERAD pathway required for clearance of misfolded proteins in the endoplasmic reticulum (ER). Promotes survival of motor neurons, probably by protecting against ER stress. This Mus musculus (Mouse) protein is Membralin (Tmem259).